We begin with the raw amino-acid sequence, 190 residues long: Xanthine phosphoribosyltransferase (190 aa).

Xanthine contacts are provided by Leu20 and Asn27. 128 to 132 is a binding site for 5-phospho-alpha-D-ribose 1-diphosphate; that stretch reads ANGKA. Lys156 contacts xanthine.

The protein belongs to the purine/pyrimidine phosphoribosyltransferase family. Xpt subfamily. As to quaternary structure, homodimer.

The protein localises to the cytoplasm. The catalysed reaction is XMP + diphosphate = xanthine + 5-phospho-alpha-D-ribose 1-diphosphate. The protein operates within purine metabolism; XMP biosynthesis via salvage pathway; XMP from xanthine: step 1/1. Converts the preformed base xanthine, a product of nucleic acid breakdown, to xanthosine 5'-monophosphate (XMP), so it can be reused for RNA or DNA synthesis. The polypeptide is Xanthine phosphoribosyltransferase (Stutzerimonas stutzeri (strain A1501) (Pseudomonas stutzeri)).